The chain runs to 249 residues: Expansin-A18 (249 aa).

The first 21 residues, 1-21 (MGNIVLQLLAILALCIAPARS), serve as a signal peptide directing secretion. The 114-residue stretch at 41–154 (GGACGYGNLY…QQVKCWRSGG (114 aa)) folds into the Expansin-like EG45 domain. Residue Asn-116 is glycosylated (N-linked (GlcNAc...) asparagine). Residues 164–243 (YFELVLVTNM…GWSFGQTFST (80 aa)) form the Expansin-like CBD domain.

This sequence belongs to the expansin family. Expansin A subfamily. In terms of tissue distribution, expressed in roots.

The protein resides in the secreted. It localises to the cell wall. Its subcellular location is the membrane. In terms of biological role, may cause loosening and extension of plant cell walls by disrupting non-covalent bonding between cellulose microfibrils and matrix glucans. No enzymatic activity has been found. May be required for rapid internodal elongation in deepwater rice during submergence. The sequence is that of Expansin-A18 (EXPA18) from Oryza sativa subsp. japonica (Rice).